Here is a 306-residue protein sequence, read N- to C-terminus: Glutaminase (306 aa).

The substrate site is built by S62, N114, E159, N166, Y190, Y242, and V260.

Belongs to the glutaminase family. In terms of assembly, homotetramer.

It carries out the reaction L-glutamine + H2O = L-glutamate + NH4(+). This is Glutaminase from Clostridium tetani (strain Massachusetts / E88).